Reading from the N-terminus, the 412-residue chain is BSD domain-containing protein 1 (412 aa).

In terms of domain architecture, BSD spans 146-198 (WLAYWDPEHRKAEISELLVTSPSIRALYTKMVPAAVSHSEFWQRYFYKVHQLE). Composition is skewed to basic and acidic residues over residues 208–219 (KQRADQSVHSEE) and 255–271 (HVED…RDHT). 2 disordered regions span residues 208-228 (KQRA…EEED) and 255-383 (HVED…EKDF). Positions 272 to 287 (SITSPSESSESISPIT) are enriched in low complexity. A compositionally biased stretch (basic and acidic residues) spans 340–351 (THREDPPSDLRV). Residues 355-374 (NSDSGKSTPSNNGQKGSSTD) show a composition bias toward polar residues.

This chain is BSD domain-containing protein 1 (bsdc1), found in Xenopus tropicalis (Western clawed frog).